The chain runs to 140 residues: Pro-vaccinia growth factor (140 aa).

Positions 1–18 (MLINYLMLLFAAMIIRSF) are cleaved as a signal peptide. Residues 19-100 (ADSGNAIETT…SEKPNTTTSY (82 aa)) are Extracellular-facing. Asn34 carries an N-linked (GlcNAc...) asparagine; by host glycan. Positions 41–81 (AIRLCGPEGDGYCLHGDCIHARDIDGMYCRCSHGYTGIRCQ) constitute an EGF-like domain. 3 disulfide bridges follow: Cys45–Cys58, Cys53–Cys69, and Cys71–Cys80. Asn95 is a glycosylation site (N-linked (GlcNAc...) asparagine; by host). The helical transmembrane segment at 101–121 (IPSPGIMLVLVGIIIITCCLL) threads the bilayer. Topologically, residues 122-140 (SVYRFTRRTKLPLQDMVVP) are cytoplasmic.

Belongs to the orthopoxvirus OPG019 family. Vaccinia growth factor interacts with host EGFR and promotes EGFR dimerization.

The protein localises to the host membrane. Its subcellular location is the secreted. Its function is as follows. Stimulates cellular proliferation (hyperplasia)and mobility around infected cells to promote rapid and efficient spread of infection. This effect is beneficial for virus replication in vivo, because poxviruses replicate possibly better in proliferating cells than in quiescent cells. Acts by binding host EGFR, inducing its dimerization, autophosphorylation and leading to activation of several cellular pathways regulating cell proliferation or cell survival. The activation by host EGFR of mitogen activated protein kinases (MAPK) and extracellular-signal regulated kinases (ERK) are essential for the positive effect of vaccinia growth factor on poxvirus virulence in vivo. In Homo sapiens (Human), this protein is Pro-vaccinia growth factor (OPG019).